A 163-amino-acid chain; its full sequence is Photosystem II extrinsic protein V (163 aa).

The first 26 residues, 1–26 (MFKKSSQLFSLVFFTIFSIFIGTASA), serve as a signal peptide directing secretion. Heme c is bound by residues Cys-63, Cys-66, His-67, and Met-130.

The protein belongs to the cytochrome c family. PsbV subfamily. As to quaternary structure, PSII is composed of 1 copy each of membrane proteins PsbA, PsbB, PsbC, PsbD, PsbE, PsbF, PsbH, PsbI, PsbJ, PsbK, PsbL, PsbM, PsbT, PsbY, PsbZ, Psb30/Ycf12, at least 3 peripheral proteins of the oxygen-evolving complex and a large number of cofactors. It forms dimeric complexes. Requires heme c as cofactor.

The protein resides in the plastid. It localises to the chloroplast thylakoid membrane. One of the extrinsic, lumenal subunits of photosystem II (PSII). PSII is a light-driven water plastoquinone oxidoreductase, using light energy to abstract electrons from H(2)O, generating a proton gradient subsequently used for ATP formation. The extrinsic proteins stabilize the structure of photosystem II oxygen-evolving complex (OEC), the ion environment of oxygen evolution and protect the OEC against heat-induced inactivation. In Phaeodactylum tricornutum (strain CCAP 1055/1), this protein is Photosystem II extrinsic protein V.